We begin with the raw amino-acid sequence, 341 residues long: LIM and senescent cell antigen-like-containing domain protein 2 (341 aa).

LIM zinc-binding domains are found at residues 13-74 (AVCQ…LFAP), 76-133 (CGSC…EKAK), 138-195 (YICQ…KMGV), 196-255 (PICG…LFGD), and 256-315 (VCYN…FPLE). Phe22 carries the phosphoserine modification. Thr327 carries the post-translational modification Phosphothreonine. Ser328 carries the post-translational modification Phosphoserine.

In terms of assembly, interacts with TGFB1I1. Interacts with integrin-linked protein kinase 1 (ILK) via the first LIM domain, and in competition with LIMS1. Part of the heterotrimeric IPP complex composed of integrin-linked kinase (ILK), LIMS1 or LIMS2, and PARVA.

The protein resides in the nucleus. Its subcellular location is the cell junction. It localises to the focal adhesion. The protein localises to the cell membrane. Adapter protein in a cytoplasmic complex linking beta-integrins to the actin cytoskeleton, bridges the complex to cell surface receptor tyrosine kinases and growth factor receptors. Plays a role in modulating cell spreading and migration. This Homo sapiens (Human) protein is LIM and senescent cell antigen-like-containing domain protein 2 (LIMS2).